The chain runs to 425 residues: Histidine--tRNA ligase (425 aa).

It belongs to the class-II aminoacyl-tRNA synthetase family. Homodimer.

Its subcellular location is the cytoplasm. It catalyses the reaction tRNA(His) + L-histidine + ATP = L-histidyl-tRNA(His) + AMP + diphosphate + H(+). The chain is Histidine--tRNA ligase from Aeromonas hydrophila subsp. hydrophila (strain ATCC 7966 / DSM 30187 / BCRC 13018 / CCUG 14551 / JCM 1027 / KCTC 2358 / NCIMB 9240 / NCTC 8049).